A 73-amino-acid polypeptide reads, in one-letter code: UPF0352 protein HSM_0097 (73 aa).

Belongs to the UPF0352 family.

This Histophilus somni (strain 2336) (Haemophilus somnus) protein is UPF0352 protein HSM_0097.